The sequence spans 32 residues: Photosystem II reaction center protein Z (32 aa).

Residues 9–29 (IIFSGSLIWVFLLIIVGFLNY) form a helical membrane-spanning segment.

Belongs to the PsbZ family. In terms of assembly, PSII is composed of 1 copy each of membrane proteins PsbA, PsbB, PsbC, PsbD, PsbE, PsbF, PsbH, PsbI, PsbJ, PsbK, PsbL, PsbM, PsbT, PsbY, PsbZ, Psb30/Ycf12, at least 3 peripheral proteins of the oxygen-evolving complex and a large number of cofactors. It forms dimeric complexes.

It is found in the plastid. It localises to the chloroplast thylakoid membrane. Its function is as follows. May control the interaction of photosystem II (PSII) cores with the light-harvesting antenna, regulates electron flow through the 2 photosystem reaction centers. PSII is a light-driven water plastoquinone oxidoreductase, using light energy to abstract electrons from H(2)O, generating a proton gradient subsequently used for ATP formation. The protein is Photosystem II reaction center protein Z of Euglena myxocylindracea.